Consider the following 214-residue polypeptide: Phosphatidylserine decarboxylase proenzyme (214 aa).

Catalysis depends on serine 183, which acts as the Schiff-base intermediate with substrate; via pyruvic acid. Pyruvic acid (Ser); by autocatalysis is present on serine 183.

Belongs to the phosphatidylserine decarboxylase family. PSD-A subfamily. Heterodimer of a large membrane-associated beta subunit and a small pyruvoyl-containing alpha subunit. Pyruvate is required as a cofactor. Post-translationally, is synthesized initially as an inactive proenzyme. Formation of the active enzyme involves a self-maturation process in which the active site pyruvoyl group is generated from an internal serine residue via an autocatalytic post-translational modification. Two non-identical subunits are generated from the proenzyme in this reaction, and the pyruvate is formed at the N-terminus of the alpha chain, which is derived from the carboxyl end of the proenzyme. The post-translation cleavage follows an unusual pathway, termed non-hydrolytic serinolysis, in which the side chain hydroxyl group of the serine supplies its oxygen atom to form the C-terminus of the beta chain, while the remainder of the serine residue undergoes an oxidative deamination to produce ammonia and the pyruvoyl prosthetic group on the alpha chain.

It is found in the cell membrane. It catalyses the reaction a 1,2-diacyl-sn-glycero-3-phospho-L-serine + H(+) = a 1,2-diacyl-sn-glycero-3-phosphoethanolamine + CO2. It functions in the pathway phospholipid metabolism; phosphatidylethanolamine biosynthesis; phosphatidylethanolamine from CDP-diacylglycerol: step 2/2. In terms of biological role, catalyzes the formation of phosphatidylethanolamine (PtdEtn) from phosphatidylserine (PtdSer). This Desulfotalea psychrophila (strain LSv54 / DSM 12343) protein is Phosphatidylserine decarboxylase proenzyme.